The chain runs to 159 residues: NADH-quinone oxidoreductase subunit I (159 aa).

4Fe-4S ferredoxin-type domains are found at residues arginine 51–aspartate 80 and threonine 90–asparagine 119. Residues cysteine 60, cysteine 63, cysteine 66, cysteine 70, cysteine 99, cysteine 102, cysteine 105, and cysteine 109 each contribute to the [4Fe-4S] cluster site.

The protein belongs to the complex I 23 kDa subunit family. In terms of assembly, NDH-1 is composed of 14 different subunits. Subunits NuoA, H, J, K, L, M, N constitute the membrane sector of the complex. The cofactor is [4Fe-4S] cluster.

It is found in the cell inner membrane. The catalysed reaction is a quinone + NADH + 5 H(+)(in) = a quinol + NAD(+) + 4 H(+)(out). Its function is as follows. NDH-1 shuttles electrons from NADH, via FMN and iron-sulfur (Fe-S) centers, to quinones in the respiratory chain. The immediate electron acceptor for the enzyme in this species is believed to be ubiquinone. Couples the redox reaction to proton translocation (for every two electrons transferred, four hydrogen ions are translocated across the cytoplasmic membrane), and thus conserves the redox energy in a proton gradient. This is NADH-quinone oxidoreductase subunit I from Rickettsia bellii (strain OSU 85-389).